Consider the following 176-residue polypeptide: Cytochrome b (176 aa).

3 helical membrane passes run 33–53 (FGSL…FLAM), 77–98 (WLLR…YLHI), and 113–133 (WNVG…GYVL). His83 and His97 together coordinate heme b.

Belongs to the cytochrome b family. In terms of assembly, the cytochrome bc1 complex contains 11 subunits: 3 respiratory subunits (MT-CYB, CYC1 and UQCRFS1), 2 core proteins (UQCRC1 and UQCRC2) and 6 low-molecular weight proteins (UQCRH/QCR6, UQCRB/QCR7, UQCRQ/QCR8, UQCR10/QCR9, UQCR11/QCR10 and a cleavage product of UQCRFS1). This cytochrome bc1 complex then forms a dimer. Heme b serves as cofactor.

It localises to the mitochondrion inner membrane. Component of the ubiquinol-cytochrome c reductase complex (complex III or cytochrome b-c1 complex) that is part of the mitochondrial respiratory chain. The b-c1 complex mediates electron transfer from ubiquinol to cytochrome c. Contributes to the generation of a proton gradient across the mitochondrial membrane that is then used for ATP synthesis. This is Cytochrome b (MT-CYB) from Promops centralis (Big crested mastiff bat).